The chain runs to 450 residues: Tubulin beta-2 chain (450 aa).

GTP contacts are provided by glutamine 11, glutamate 69, serine 138, glycine 142, threonine 143, glycine 144, asparagine 204, and asparagine 226. Position 69 (glutamate 69) interacts with Mg(2+). Positions alanine 428 to glutamine 450 are disordered. Residues threonine 429–glutamine 450 are compositionally biased toward acidic residues.

Belongs to the tubulin family. As to quaternary structure, dimer of alpha and beta chains. A typical microtubule is a hollow water-filled tube with an outer diameter of 25 nm and an inner diameter of 15 nm. Alpha-beta heterodimers associate head-to-tail to form protofilaments running lengthwise along the microtubule wall with the beta-tubulin subunit facing the microtubule plus end conferring a structural polarity. Microtubules usually have 13 protofilaments but different protofilament numbers can be found in some organisms and specialized cells. Mg(2+) serves as cofactor. Cleaved by caspase ced-3 in vitro.

It localises to the cytoplasm. The protein resides in the cytoskeleton. Tubulin is the major constituent of microtubules, a cylinder consisting of laterally associated linear protofilaments composed of alpha- and beta-tubulin heterodimers. Microtubules grow by the addition of GTP-tubulin dimers to the microtubule end, where a stabilizing cap forms. Below the cap, tubulin dimers are in GDP-bound state, owing to GTPase activity of alpha-tubulin. Required for the normal dynamic behavior of the non-centrosomal microtubules in the epidermal syncytium. Involved in the redistribution of microtubule end-binding protein EB1/ebp-2 caused by wounding. Required to modulate expression in the epidermis of antimicrobial peptides, such as nlp-29, after wounding, or fungal infection. This chain is Tubulin beta-2 chain (tbb-2), found in Caenorhabditis elegans.